The chain runs to 1132 residues: Ubiquitin-associated protein 2 (1132 aa).

The interval 1–29 is disordered; that stretch reads MMTSVSNDRCRGAREKPQMPTAHAAQSQK. A compositionally biased stretch (basic and acidic residues) spans 8-17; sequence DRCRGAREKP. The UBA domain occupies 48-92; it reads KNDSDFEAKVKQLMEVTGKNQDECIVALHDCNGDVNKAINILLEG. Disordered stretches follow at residues 95–202, 221–248, 331–351, 380–479, 602–679, 713–749, 875–919, 996–1033, 1040–1059, and 1087–1132; these read DTTS…YSES, GTDE…YGLK, NNQM…SPQS, LKPP…STVS, TSSA…VSTL, PLSQ…VEST, PYSG…LNPG, GGYG…GSVY, DKQG…SALG, and PHSQ…YWTN. Residues 109 to 130 show a composition bias toward basic and acidic residues; it reads FGRESSENKENREKRTEREASR. Arg166 is subject to Omega-N-methylarginine. Positions 168–182 are enriched in basic residues; sequence KRARGRGFGRGRGRG. Polar residues-rich tracts occupy residues 233-244 and 331-340; these read HSMSQEPPSKSS and NNQMAPGTAN. Positions 341 to 351 are enriched in low complexity; the sequence is STSASSYSPQS. Over residues 392–404 the composition is skewed to polar residues; it reads SSAQQNDTASPPA. Residues Ser433 and Ser440 each carry the phosphoserine modification. Low complexity-rich tracts occupy residues 436–448 and 602–618; these read LSQL…HQTQ and TSSA…SSSY. The segment covering 619 to 630 has biased composition (polar residues); sequence DQSSVHTRIAYQ. Ser631 carries the phosphoserine modification. Residues 631 to 644 show a composition bias toward low complexity; the sequence is SSASPPDSAPGSVA. Residues 652–662 are compositionally biased toward polar residues; that stretch reads SQHTVDTTSSV. Residues 713 to 722 are compositionally biased toward low complexity; the sequence is PLSQLSSSLS. Polar residues predominate over residues 723–742; that stretch reads GHQNSMTSAHATRSTSTPHT. Residues 897–914 are compositionally biased toward low complexity; sequence PAQAQQSQSQTHHTAQQP. Low complexity predominate over residues 1101–1115; sequence PSGSGQRSQPSSLQP. Over residues 1116–1132 the composition is skewed to polar residues; the sequence is KSQASKPTYGSAPYWTN.

As to quaternary structure, may interact with ANXA2.

The protein localises to the nucleus. The protein resides in the chromosome. It localises to the cytoplasm. Recruits the ubiquitination machinery to RNA polymerase II for polyubiquitination, removal and degradation, when the transcription-coupled nucleotide excision repair (TC-NER) machinery fails to resolve DNA damage. May promote the degradation of ANXA2. This chain is Ubiquitin-associated protein 2, found in Mus musculus (Mouse).